A 301-amino-acid polypeptide reads, in one-letter code: rRNA methyltransferase 1, mitochondrial (301 aa).

The transit peptide at 1-11 (MIRSRVNLARE) directs the protein to the mitochondrion. Positions 121 to 141 (YNNKNGQDSPHNDLNEGKSSS) are disordered.

Belongs to the class IV-like SAM-binding methyltransferase superfamily. RNA methyltransferase TrmH family.

The protein resides in the mitochondrion. The catalysed reaction is a guanosine in 21S rRNA + S-adenosyl-L-methionine = a 2'-O-methylguanosine in 21S rRNA + S-adenosyl-L-homocysteine + H(+). In terms of biological role, S-adenosyl-L-methionine-dependent 2'-O-ribose methyltransferase that catalyzes the formation of the 2'-O-methylguanosine corresponding to position 2270 in S.cerevisiae 21S mitochondrial large subunit ribosomal RNA (mtLSU rRNA), a universally conserved modification in the peptidyl transferase domain of the mtLSU rRNA. This Schizosaccharomyces pombe (strain 972 / ATCC 24843) (Fission yeast) protein is rRNA methyltransferase 1, mitochondrial.